The sequence spans 197 residues: Ribonuclease HII (197 aa).

The 194-residue stretch at 4 to 197 folds into the RNase H type-2 domain; sequence IWVCGVDEAG…VRKALESVAS (194 aa). The a divalent metal cation site is built by Asp10, Glu11, and Asp106.

This sequence belongs to the RNase HII family. Requires Mn(2+) as cofactor. Mg(2+) is required as a cofactor.

It is found in the cytoplasm. The enzyme catalyses Endonucleolytic cleavage to 5'-phosphomonoester.. Its function is as follows. Endonuclease that specifically degrades the RNA of RNA-DNA hybrids. This Polynucleobacter necessarius subsp. necessarius (strain STIR1) protein is Ribonuclease HII.